Reading from the N-terminus, the 824-residue chain is U-box domain-containing protein 24 (824 aa).

Positions Gly-13–Lys-92 constitute a U-box domain. ARM repeat units lie at residues Ala-133–Glu-172, Asp-175–Gly-214, Pro-217–Arg-258, Asp-260–Leu-299, Ala-300–Ser-339, Glu-341–Ala-385, Asp-396–Gly-435, Val-441–Val-481, and Leu-486–Ala-525.

As to quaternary structure, interacts with BZR1, BZR2, BZR3 and GSK2. In terms of processing, auto-ubiquitinated. Post-translationally, phosphorylated by GSK2. Phosphorylation of PUB24 increases its cellular stability.

The protein localises to the cytoplasm. The protein resides in the cytosol. Its subcellular location is the nucleus. It carries out the reaction S-ubiquitinyl-[E2 ubiquitin-conjugating enzyme]-L-cysteine + [acceptor protein]-L-lysine = [E2 ubiquitin-conjugating enzyme]-L-cysteine + N(6)-ubiquitinyl-[acceptor protein]-L-lysine.. The protein operates within protein modification; protein ubiquitination. Functionally, E3 ubiquitin-protein ligase that functions as a negative regulator of brassinosteroid (BR) signaling. Targets BZR1, a positive regulator of BR signaling pathway, and promotes its degradation via the ubiquitin-26S proteasome pathway. The chain is U-box domain-containing protein 24 from Oryza sativa subsp. japonica (Rice).